Reading from the N-terminus, the 422-residue chain is Glutamyl-tRNA reductase (422 aa).

Substrate is bound by residues 49–52, S107, 112–114, and Q118; these read TCNR and EPQ. C50 (nucleophile) is an active-site residue. 187–192 contacts NADP(+); that stretch reads GAGETI.

Belongs to the glutamyl-tRNA reductase family. In terms of assembly, homodimer.

The enzyme catalyses (S)-4-amino-5-oxopentanoate + tRNA(Glu) + NADP(+) = L-glutamyl-tRNA(Glu) + NADPH + H(+). The protein operates within porphyrin-containing compound metabolism; protoporphyrin-IX biosynthesis; 5-aminolevulinate from L-glutamyl-tRNA(Glu): step 1/2. In terms of biological role, catalyzes the NADPH-dependent reduction of glutamyl-tRNA(Glu) to glutamate 1-semialdehyde (GSA). The polypeptide is Glutamyl-tRNA reductase (Stutzerimonas stutzeri (strain A1501) (Pseudomonas stutzeri)).